The primary structure comprises 337 residues: Nucleoid-associated protein HSM_0096 (337 aa).

This sequence belongs to the YejK family.

Its subcellular location is the cytoplasm. The protein localises to the nucleoid. The polypeptide is Nucleoid-associated protein HSM_0096 (Histophilus somni (strain 2336) (Haemophilus somnus)).